Here is a 592-residue protein sequence, read N- to C-terminus: Dictomallein-1 (592 aa).

An N-terminal signal peptide occupies residues 1-19 (MKILIILLVFLNLITNINC). The 263-residue stretch at 140–402 (PNIGHETNLN…QNYFKDSIIY (263 aa)) folds into the Peptidase M66 domain. Histidine 294 serves as a coordination point for Zn(2+). Glutamate 295 is an active-site residue. 2 residues coordinate Zn(2+): histidine 298 and histidine 304.

It belongs to the dictomallein family. The cofactor is Zn(2+).

The protein resides in the secreted. The chain is Dictomallein-1 (dtmlA) from Dictyostelium discoideum (Social amoeba).